The sequence spans 551 residues: Solute carrier family 22 member 4 (551 aa).

The Cytoplasmic segment spans residues 1 to 20 (MRDYDEAIAFLGEWGPFQRL). Residues 21-41 (IFFLLSASIIPNGFNGMSVVF) form a helical membrane-spanning segment. The Extracellular segment spans residues 42 to 141 (LAGTPEHRCR…WNLVCEDNWK (100 aa)). N-linked (GlcNAc...) asparagine glycans are attached at residues Asn-57, Asn-64, and Asn-91. Residues 142 to 162 (VPLTTSLFFVGVLLGSFVSGQ) traverse the membrane as a helical segment. The Cytoplasmic segment spans residues 163–171 (LSDRFGRKN). A helical transmembrane segment spans residues 172–192 (VLFATMAVQTGFSFLQIFSIS). Residues 193–197 (WEMFT) are Extracellular-facing. The helical transmembrane segment at 198–218 (VLFLIVGMGQISNYVVAFILG) threads the bilayer. Residue 218 to 225 (GTEILGKS) participates in ATP binding. Residues 219 to 232 (TEILGKSVRIIFST) are Cytoplasmic-facing. A helical membrane pass occupies residues 233 to 253 (LGVCTFFAVGYMLLPLFAYFI). Over 254–257 (RDWR) the chain is Extracellular. The chain crosses the membrane as a helical span at residues 258 to 278 (MLLLALTVPGVLCVPLWWFIP). Topologically, residues 279–337 (ESPRWLISQRRFREAEDIIQKAAKMNNIAVPAVIFDSVEELNPLKQQKAFILDLFRTWN) are cytoplasmic. The chain crosses the membrane as a helical span at residues 338-358 (IAIMTIMSLLLWMLTSVGYFA). Residues 359 to 371 (LSLDTPNLHGDAY) lie on the Extracellular side of the membrane. The helical transmembrane segment at 372 to 392 (LNCFLSALIEIPAYITAWLLL) threads the bilayer. At 393–399 (RTLPRRY) the chain is on the cytoplasmic side. A helical membrane pass occupies residues 400–420 (IIAAVLFWGGGVLLFIQLVPV). At 421–426 (DYYFLS) the chain is on the extracellular side. Residues 427-447 (IGLVMLGKFGITSAFSMLYVF) traverse the membrane as a helical segment. At 448–460 (TAELYPTMVRNMA) the chain is on the cytoplasmic side. A helical transmembrane segment spans residues 461 to 481 (VGVTSMASRVGSIIAPYFVYL). The Extracellular portion of the chain corresponds to 482-486 (GAYNR). Residues 487 to 507 (MLPYIVMGSLTVLIGILTLFF) traverse the membrane as a helical segment. Over 508–551 (PESLGMTLPETLEQMQKVKWFRSGKKTRDSMETEENPKVLITAF) the chain is Cytoplasmic.

It belongs to the major facilitator (TC 2.A.1) superfamily. Organic cation transporter (TC 2.A.1.19) family. Interacts with PDZK1.

Its subcellular location is the apical cell membrane. The protein localises to the basal cell membrane. It is found in the mitochondrion membrane. It carries out the reaction ergothioneine(out) + Na(+)(out) = ergothioneine(in) + Na(+)(in). The catalysed reaction is acetylcholine(in) = acetylcholine(out). The enzyme catalyses (R)-carnitine(out) + Na(+)(out) = (R)-carnitine(in) + Na(+)(in). It catalyses the reaction glycine betaine(out) + Na(+)(out) = glycine betaine(in) + Na(+)(in). With respect to regulation, allosterically activated by intracellular ATP. Transporter that mediates the transport of endogenous and microbial zwitterions and organic cations. Functions as a Na(+)-dependent and pH-dependent high affinity microbial symporter of potent food-derived antioxidant ergothioeine. Transports one sodium ion with one ergothioeine molecule. Involved in the absorption of ergothioneine from the luminal/apical side of the small intestine and renal tubular cells, and into non-parenchymal liver cells, thereby contributing to maintain steady-state ergothioneine level in the body. Also mediates the bidirectional transport of acetycholine, although the exact transport mechanism has not been fully identified yet. Most likely exports anti-inflammatory acetylcholine in non-neuronal tissues, thereby contributing to the non-neuronal cholinergic system. Displays a general physiological role linked to better survival by controlling inflammation and oxidative stress, which may be related to ergothioneine and acetycholine transports. May also function as a low-affinity Na(+)-dependent transporter of L-carnitine through the mitochondrial membrane, thereby maintaining intracellular carnitine homeostasis. May contribute to regulate the transport of cationic compounds in testis across the blood-testis-barrier. The chain is Solute carrier family 22 member 4 (SLC22A4) from Papio anubis (Olive baboon).